The following is a 691-amino-acid chain: Elongation factor G (691 aa).

The 276-residue stretch at 8-283 folds into the tr-type G domain; it reads KRVRNIGIAA…AVVAYLPAPD (276 aa). GTP is bound by residues 17 to 24, 81 to 85, and 135 to 138; these read AHIDAGKT, DTPGH, and NKMD.

This sequence belongs to the TRAFAC class translation factor GTPase superfamily. Classic translation factor GTPase family. EF-G/EF-2 subfamily.

The protein resides in the cytoplasm. Catalyzes the GTP-dependent ribosomal translocation step during translation elongation. During this step, the ribosome changes from the pre-translocational (PRE) to the post-translocational (POST) state as the newly formed A-site-bound peptidyl-tRNA and P-site-bound deacylated tRNA move to the P and E sites, respectively. Catalyzes the coordinated movement of the two tRNA molecules, the mRNA and conformational changes in the ribosome. The polypeptide is Elongation factor G (Campylobacter lari (strain RM2100 / D67 / ATCC BAA-1060)).